Consider the following 347-residue polypeptide: N-acetyl-gamma-glutamyl-phosphate reductase (347 aa).

C150 is a catalytic residue.

Belongs to the NAGSA dehydrogenase family. Type 1 subfamily.

The protein resides in the cytoplasm. The enzyme catalyses N-acetyl-L-glutamate 5-semialdehyde + phosphate + NADP(+) = N-acetyl-L-glutamyl 5-phosphate + NADPH + H(+). It participates in amino-acid biosynthesis; L-arginine biosynthesis; N(2)-acetyl-L-ornithine from L-glutamate: step 3/4. In terms of biological role, catalyzes the NADPH-dependent reduction of N-acetyl-5-glutamyl phosphate to yield N-acetyl-L-glutamate 5-semialdehyde. This chain is N-acetyl-gamma-glutamyl-phosphate reductase, found in Leifsonia xyli subsp. xyli (strain CTCB07).